We begin with the raw amino-acid sequence, 254 residues long: Bacteriorhodopsin-I (254 aa).

A propeptide spanning residues 1 to 6 (MSQLAL) is cleaved from the precursor. A Pyrrolidone carboxylic acid modification is found at glutamine 7. 7 consecutive transmembrane segments (helical) span residues 16–36 (EGIWLALGTIGMLLGMLYFIA), 51–71 (VITILIPAIAAASYLSMFFGF), 91–111 (YADWLFTTPLLLLDIGLLAGA), 116–136 (IGALVGIDAFMIVTGLVATLT), 144–164 (AFWTISTISMVFLLYYLVAVF), 185–205 (IILVTWAIYPVAWLVGTEGLA), and 212–232 (ETLLFMVLDLVAKVGFGFILL). Residue lysine 224 is modified to N6-(retinylidene)lysine.

The protein belongs to the archaeal/bacterial/fungal opsin family. The covalent binding of retinal to the apoprotein, bacterioopsin, generates bacteriorhodopsin.

Its subcellular location is the cell membrane. Its function is as follows. Light-driven proton pump. This chain is Bacteriorhodopsin-I (bop1), found in Haloquadratum walsbyi (strain DSM 16854 / JCM 12705 / C23).